Here is a 307-residue protein sequence, read N- to C-terminus: tRNA dimethylallyltransferase (307 aa).

Residue 5–12 (GPTGTGKS) coordinates ATP. 7–12 (TGTGKS) contacts substrate.

It belongs to the IPP transferase family. Monomer. Mg(2+) is required as a cofactor.

It carries out the reaction adenosine(37) in tRNA + dimethylallyl diphosphate = N(6)-dimethylallyladenosine(37) in tRNA + diphosphate. Catalyzes the transfer of a dimethylallyl group onto the adenine at position 37 in tRNAs that read codons beginning with uridine, leading to the formation of N6-(dimethylallyl)adenosine (i(6)A). The protein is tRNA dimethylallyltransferase of Mycobacterium avium (strain 104).